The primary structure comprises 1025 residues: Adenylate-forming reductase 03009 (1025 aa).

The adenylation (A) domain stretch occupies residues 38-422; it reads FEFHAKSNPQ…LGRIDNQVKI (385 aa). Residues 332–333 and 412–415 contribute to the AMP site; these read VT and HLGR. Residues 556 to 638 are thiolation and peptide carrier (T) domain; it reads SLGSTNTKIS…AILIWICVKK (83 aa). The segment at 682-900 is thioester reductase (TR) domain; the sequence is FIRRTAARVY…PPTKLWVKGV (219 aa). Residues 685 to 688, 769 to 771, and tyrosine 840 each bind NADP(+); these read RTAA and SAL.

Belongs to the adenylate-forming reductase family.

Functionally, adenylate-forming reductase, a natural product biosynthesis enzyme that resembles non-ribosomal peptide synthetases, yet serves to modify one substrate, rather than to condense two or more building blocks. The A-domain preferentially accepts L-serine, L-alanine and L-valine as substrates. The natural product of the enzyme is not yet known. The protein is Adenylate-forming reductase 03009 of Coprinopsis cinerea (strain Okayama-7 / 130 / ATCC MYA-4618 / FGSC 9003) (Inky cap fungus).